A 586-amino-acid chain; its full sequence is Phosphomethylpyrimidine synthase (586 aa).

The tract at residues 1–58 (MKQSVSAEQIELKSSLPGSKKVYVDGTREGMKVPMREIEQSDTNGVQNPPIRVYDTSG) is disordered. The segment covering 22–39 (VYVDGTREGMKVPMREIE) has biased composition (basic and acidic residues). Substrate is bound by residues N193, M222, Y251, H287, 307–309 (SRG), 348–351 (DGLR), and E387. H391 lines the Zn(2+) pocket. A substrate-binding site is contributed by Y414. H455 provides a ligand contact to Zn(2+). C535, C538, and C543 together coordinate [4Fe-4S] cluster.

This sequence belongs to the ThiC family. [4Fe-4S] cluster is required as a cofactor.

It catalyses the reaction 5-amino-1-(5-phospho-beta-D-ribosyl)imidazole + S-adenosyl-L-methionine = 4-amino-2-methyl-5-(phosphooxymethyl)pyrimidine + CO + 5'-deoxyadenosine + formate + L-methionine + 3 H(+). Its pathway is cofactor biosynthesis; thiamine diphosphate biosynthesis. Its function is as follows. Catalyzes the synthesis of the hydroxymethylpyrimidine phosphate (HMP-P) moiety of thiamine from aminoimidazole ribotide (AIR) in a radical S-adenosyl-L-methionine (SAM)-dependent reaction. The chain is Phosphomethylpyrimidine synthase from Bacillus mycoides (strain KBAB4) (Bacillus weihenstephanensis).